The primary structure comprises 884 residues: Translation initiation factor IF-2 (884 aa).

Composition is skewed to basic and acidic residues over residues 110–153 and 193–234; these read AKAK…KEKA and KQKE…DHHV. Residues 110 to 291 are disordered; sequence AKAKAEADAK…NRSTAPQSMA (182 aa). Basic residues predominate over residues 255–268; it reads GRRARNKPTNKKRG. One can recognise a tr-type G domain in the interval 384 to 553; it reads TRAPVVTIMG…LLQSEVLELK (170 aa). The G1 stretch occupies residues 393 to 400; that stretch reads GHVDHGKT. Residue 393 to 400 participates in GTP binding; sequence GHVDHGKT. The segment at 418–422 is G2; the sequence is GITQH. Residues 439 to 442 are G3; sequence DTPG. GTP-binding positions include 439–443 and 493–496; these read DTPGH and NKMD. The segment at 493-496 is G4; it reads NKMD. A G5 region spans residues 529 to 531; it reads SAK.

It belongs to the TRAFAC class translation factor GTPase superfamily. Classic translation factor GTPase family. IF-2 subfamily.

The protein localises to the cytoplasm. One of the essential components for the initiation of protein synthesis. Protects formylmethionyl-tRNA from spontaneous hydrolysis and promotes its binding to the 30S ribosomal subunits. Also involved in the hydrolysis of GTP during the formation of the 70S ribosomal complex. The chain is Translation initiation factor IF-2 from Shewanella denitrificans (strain OS217 / ATCC BAA-1090 / DSM 15013).